A 974-amino-acid polypeptide reads, in one-letter code: Translation initiation factor IF-2 (974 aa).

Disordered regions lie at residues 67–86, 101–133, and 146–385; these read TRKH…ARTI, DVAE…RREA, and RQER…TFQA. Positions 105–114 are enriched in low complexity; the sequence is GAEQGQAQVA. Composition is skewed to basic and acidic residues over residues 121 to 133 and 146 to 181; these read ELKR…RREA and RQER…KRAA. The span at 182-197 shows a compositional bias: low complexity; that stretch reads AEAAAAQQAAAQQAAE. A compositionally biased stretch (basic and acidic residues) spans 210–261; the sequence is EEARAAAERAAQREAAKKAEDAAREAADKARAEQEEIRKRREAAEAEARAIR. Positions 313–329 are enriched in low complexity; the sequence is PAGATPATTQAPAAGAG. A compositionally biased stretch (gly residues) spans 358–371; it reads SSGGVDRGWRGGPK. Residues 474–643 enclose the tr-type G domain; it reads PRPPVVTVMG…LLQAEVLELK (170 aa). The segment at 483 to 490 is G1; sequence GHVDHGKT. Residue 483-490 participates in GTP binding; it reads GHVDHGKT. The interval 508–512 is G2; sequence GITQH. Residues 529–532 are G3; that stretch reads DTPG. GTP is bound by residues 529 to 533 and 583 to 586; these read DTPGH and NKID. Residues 583 to 586 form a G4 region; the sequence is NKID. Positions 619–621 are G5; the sequence is SAK.

This sequence belongs to the TRAFAC class translation factor GTPase superfamily. Classic translation factor GTPase family. IF-2 subfamily.

It is found in the cytoplasm. Its function is as follows. One of the essential components for the initiation of protein synthesis. Protects formylmethionyl-tRNA from spontaneous hydrolysis and promotes its binding to the 30S ribosomal subunits. Also involved in the hydrolysis of GTP during the formation of the 70S ribosomal complex. This is Translation initiation factor IF-2 from Burkholderia vietnamiensis (strain G4 / LMG 22486) (Burkholderia cepacia (strain R1808)).